The chain runs to 275 residues: Prohibitin-1 (275 aa).

The AIM signature appears at 106 to 109 (YQNL).

This sequence belongs to the prohibitin family. As to quaternary structure, the mitochondrial prohibitin complex consists of two subunits (PHB1 and PHB2). The subunits assemble into a membrane-associated ring-shaped supercomplex of approximately 1 mDa. Interacts with ATG24/SNX4; the interaction is direct and plays a role in mitophagy.

It localises to the mitochondrion inner membrane. In terms of biological role, prohibitin probably acts as a holdase/unfoldase for the stabilization of newly synthesized mitochondrial proteins. Involved in mitophagy. Required for the switch to necrotrophic growth. The polypeptide is Prohibitin-1 (Colletotrichum higginsianum (strain IMI 349063) (Crucifer anthracnose fungus)).